A 757-amino-acid polypeptide reads, in one-letter code: Myb-related protein A (757 aa).

3 HTH myb-type domains span residues 30–81 (KKIC…QKVL), 82–137 (NPEL…NPEV), and 138–188 (KKSS…RRKV). 3 DNA-binding regions (H-T-H motif) span residues 58 to 81 (WAFIASHLQNRSDFQCQHRWQKVL), 110 to 133 (WSLIAKHLKGRIGKQCRERWHNHL), and 161 to 184 (WAEIAKLLPGRTDNSIKNHWNSTM). Residues 187–209 (KVEQEGYLQDGTKSSSERTGSST) form a disordered region. The span at 197 to 209 (GTKSSSERTGSST) shows a compositional bias: polar residues. The transcriptional activation domain stretch occupies residues 235 to 300 (IPVYQYASPE…RLSSQAGSLP (66 aa)). A negative regulatory domain region spans residues 303 to 558 (SGSFVMEDCV…IRRSLLGSTP (256 aa)).

Component of the DREAM complex. As to expression, expressed ubiquitously.

The protein localises to the nucleus. Its function is as follows. Strong transcriptional activator; DNA-binding protein that specifically recognize the sequence 5'-YAAC[GT]G-3'. Could have a role in the proliferation and/or differentiation of neurogenic, spermatogenic and B-lymphoid cells. The protein is Myb-related protein A (MYBL1) of Gallus gallus (Chicken).